The primary structure comprises 410 residues: Platelet-activating factor acetylhydrolase IB subunit alpha (410 aa).

A required for self-association and interaction with PAFAH1B2 and PAFAH1B3 region spans residues 1 to 38 (MVLSQRQRDELNRAIADYLRSNGYEEAYSVFKKEAELD). Residues 1–66 (MVLSQRQRDE…SVIRLQKKVM (66 aa)) form an interaction with NDE1 region. The tract at residues 1-102 (MVLSQRQRDE…EWIPRPPEKY (102 aa)) is interaction with NDEL1. Residues 7–39 (QRDELNRAIADYLRSNGYEEAYSVFKKEAELDM) enclose the LisH domain. Lys53 carries the N6-acetyllysine modification. Residues 56–82 (TSVIRLQKKVMELESKLNEAKEEFTSG) adopt a coiled-coil conformation. The interaction with dynein and dynactin stretch occupies residues 83 to 410 (GPLGQKRDPK…DQTVKVWECR (328 aa)). WD repeat units lie at residues 106-147 (GHRS…RTLK), 148-187 (GHTD…CIRT), 190-229 (GHDH…CVKT), 232-271 (GHRE…CKAE), 274-333 (EHEH…CLMT), 336-377 (GHDN…KTLN), and 378-410 (AHEH…WECR). Residue Ser109 is modified to Phosphoserine. The interaction with DCX stretch occupies residues 367-409 (YKNKRCMKTLNAHEHFVTSLDFHKTAPYVVTGSVDQTVKVWEC). The tract at residues 388–410 (FHKTAPYVVTGSVDQTVKVWECR) is interaction with NDEL1.

It belongs to the WD repeat LIS1/nudF family. As to quaternary structure, can self-associate. Component of the cytosolic PAF-AH (I) heterotetrameric enzyme, which is composed of PAFAH1B1 (beta), PAFAH1B2 (alpha2) and PAFAH1B3 (alpha1) subunits. The catalytic activity of the enzyme resides in the alpha1 (PAFAH1B3) and alpha2 (PAFAH1B2) subunits, whereas the beta subunit (PAFAH1B1) has regulatory activity. Trimer formation is not essential for the catalytic activity. Interacts with the catalytic dimer of PAF-AH (I) heterotetrameric enzyme: interacts with PAFAH1B2 homodimer (alpha2/alpha2 homodimer), PAFAH1B3 homodimer (alpha1/alpha1 homodimer) and PAFAH1B2-PAFAH1B3 heterodimer (alpha2/alpha1 heterodimer). Interacts with DCX, dynein, dynactin, IQGAP1, KATNB1, NDE1, NDEL1, NUDC and RSN. Interacts with DISC1, and this interaction is enhanced by NDEL1. Interacts with DAB1 when DAB1 is phosphorylated in response to RELN/reelin signaling. Interacts with INTS13. Interacts with DCDC1.

It localises to the cytoplasm. It is found in the cytoskeleton. The protein resides in the microtubule organizing center. Its subcellular location is the centrosome. The protein localises to the spindle. It localises to the nucleus membrane. In terms of biological role, regulatory subunit (beta subunit) of the cytosolic type I platelet-activating factor (PAF) acetylhydrolase (PAF-AH (I)), an enzyme that catalyzes the hydrolyze of the acetyl group at the sn-2 position of PAF and its analogs and participates in PAF inactivation. Regulates the PAF-AH (I) activity in a catalytic dimer composition-dependent manner. Positively regulates the activity of the minus-end directed microtubule motor protein dynein. May enhance dynein-mediated microtubule sliding by targeting dynein to the microtubule plus end. Required for several dynein- and microtubule-dependent processes such as the maintenance of Golgi integrity, the peripheral transport of microtubule fragments and the coupling of the nucleus and centrosome. Required during brain development for the proliferation of neuronal precursors and the migration of newly formed neurons from the ventricular/subventricular zone toward the cortical plate. Neuronal migration involves a process called nucleokinesis, whereby migrating cells extend an anterior process into which the nucleus subsequently translocates. During nucleokinesis dynein at the nuclear surface may translocate the nucleus towards the centrosome by exerting force on centrosomal microtubules. Also required for proper activation of Rho GTPases and actin polymerization at the leading edge of locomoting cerebellar neurons and postmigratory hippocampal neurons in response to calcium influx triggered via NMDA receptors. May also play a role in other forms of cell locomotion including the migration of fibroblasts during wound healing. Required for dynein recruitment to microtubule plus ends and BICD2-bound cargos. May modulate the Reelin pathway through interaction of the PAF-AH (I) catalytic dimer with VLDLR. The protein is Platelet-activating factor acetylhydrolase IB subunit alpha of Macaca fascicularis (Crab-eating macaque).